A 640-amino-acid chain; its full sequence is Threonine--tRNA ligase (640 aa).

The TGS domain maps to 1–61 (MPIITLPNGD…TEDSTLQIIT (61 aa)). Residues 242-533 (DHRKIGKALD…LIEHYAGFMP (292 aa)) form a catalytic region. C333, H384, and H510 together coordinate Zn(2+).

Belongs to the class-II aminoacyl-tRNA synthetase family. As to quaternary structure, homodimer. Zn(2+) serves as cofactor.

Its subcellular location is the cytoplasm. It catalyses the reaction tRNA(Thr) + L-threonine + ATP = L-threonyl-tRNA(Thr) + AMP + diphosphate + H(+). Its function is as follows. Catalyzes the attachment of threonine to tRNA(Thr) in a two-step reaction: L-threonine is first activated by ATP to form Thr-AMP and then transferred to the acceptor end of tRNA(Thr). Also edits incorrectly charged L-seryl-tRNA(Thr). In Acinetobacter baumannii (strain AB0057), this protein is Threonine--tRNA ligase.